A 201-amino-acid polypeptide reads, in one-letter code: Peptidyl-prolyl cis-trans isomerase FKBP11 (201 aa).

The signal sequence occupies residues 1–27 (MTLSPLLLPLQLLLLLLFSGAVCRAEA). The 88-residue stretch at 57 to 144 (GDTLHIHYTG…QYDVELIALI (88 aa)) folds into the PPIase FKBP-type domain. Residues 156–176 (ILPLVGIAMVPALLGLIGYHL) form a helical membrane-spanning segment.

The protein belongs to the FKBP-type PPIase family. As to quaternary structure, interacts with IFITM5.

It localises to the membrane. The catalysed reaction is [protein]-peptidylproline (omega=180) = [protein]-peptidylproline (omega=0). Its function is as follows. PPIases accelerate the folding of proteins during protein synthesis. The protein is Peptidyl-prolyl cis-trans isomerase FKBP11 (Fkbp11) of Mus musculus (Mouse).